A 368-amino-acid polypeptide reads, in one-letter code: uncharacterized protein (368 aa).

Positions 3-120 (KILLADDERI…QIISSLEEII (118 aa)) constitute a Response regulatory domain. A 4-aspartylphosphate modification is found at Asp-55. Residues 259–361 (SKMIRLIADE…GLTPSEFRRK (103 aa)) enclose the HTH araC/xylS-type domain. 2 consecutive DNA-binding regions (H-T-H motif) follow at residues 278–299 (WAAK…KQET) and 327–351 (VSEI…KKYT).

In terms of processing, phosphorylated by YesM.

The protein resides in the cytoplasm. Member of the two-component regulatory system YesM/YesN. This is an uncharacterized protein from Bacillus subtilis (strain 168).